Consider the following 269-residue polypeptide: uncharacterized protein (269 aa).

Positions 1–12 are enriched in basic residues; sequence MSKRTNNKKRKH. Residues 1-82 form a disordered region; that stretch reads MSKRTNNKKR…KKKENGNENV (82 aa). Positions 21–33 are enriched in acidic residues; that stretch reads PENQDENQDEEFL. A compositionally biased stretch (basic and acidic residues) spans 34–63; the sequence is EDKNKDKNQNKNKDKNKNKDMNKNKNKDMN.

This is an uncharacterized protein from Dictyostelium discoideum (Social amoeba).